Here is a 210-residue protein sequence, read N- to C-terminus: Oxygen-insensitive NADPH nitroreductase (210 aa).

150–155 contributes to the NADP(+) binding site; sequence GVSLMG.

Belongs to the nitroreductase family.

Its function is as follows. Reduction of a variety of nitroaromatic compounds using NADPH as source of reducing equivalents; two electrons are transferred. Capable of reducing metronidazole; inactive RdxA renders the bacterium resistant to this compound. The reduction of metronidazole generates hydroxylamine, a potent mutagen and bactericide. This chain is Oxygen-insensitive NADPH nitroreductase (rdxA), found in Helicobacter pylori (strain ATCC 700392 / 26695) (Campylobacter pylori).